The primary structure comprises 336 residues: Inositol 2-dehydrogenase (336 aa).

It belongs to the Gfo/Idh/MocA family. Homotetramer.

The enzyme catalyses myo-inositol + NAD(+) = scyllo-inosose + NADH + H(+). Functionally, involved in the oxidation of myo-inositol (MI) to 2-keto-myo-inositol (2KMI or 2-inosose). In Acidiphilium cryptum (strain JF-5), this protein is Inositol 2-dehydrogenase.